Here is a 561-residue protein sequence, read N- to C-terminus: Dihydroxy-acid dehydratase (561 aa).

Cys50 lines the [2Fe-2S] cluster pocket. Asp82 provides a ligand contact to Mg(2+). Position 123 (Cys123) interacts with [2Fe-2S] cluster. Mg(2+) is bound by residues Asp124 and Lys125. The residue at position 125 (Lys125) is an N6-carboxylysine. Cys195 is a binding site for [2Fe-2S] cluster. Glu447 provides a ligand contact to Mg(2+). Residue Ser473 is the Proton acceptor of the active site.

The protein belongs to the IlvD/Edd family. In terms of assembly, homodimer. The cofactor is [2Fe-2S] cluster. Mg(2+) is required as a cofactor.

It carries out the reaction (2R)-2,3-dihydroxy-3-methylbutanoate = 3-methyl-2-oxobutanoate + H2O. It catalyses the reaction (2R,3R)-2,3-dihydroxy-3-methylpentanoate = (S)-3-methyl-2-oxopentanoate + H2O. It functions in the pathway amino-acid biosynthesis; L-isoleucine biosynthesis; L-isoleucine from 2-oxobutanoate: step 3/4. Its pathway is amino-acid biosynthesis; L-valine biosynthesis; L-valine from pyruvate: step 3/4. Its function is as follows. Functions in the biosynthesis of branched-chain amino acids. Catalyzes the dehydration of (2R,3R)-2,3-dihydroxy-3-methylpentanoate (2,3-dihydroxy-3-methylvalerate) into 2-oxo-3-methylpentanoate (2-oxo-3-methylvalerate) and of (2R)-2,3-dihydroxy-3-methylbutanoate (2,3-dihydroxyisovalerate) into 2-oxo-3-methylbutanoate (2-oxoisovalerate), the penultimate precursor to L-isoleucine and L-valine, respectively. The protein is Dihydroxy-acid dehydratase of Chloroflexus aurantiacus (strain ATCC 29366 / DSM 635 / J-10-fl).